The following is a 1191-amino-acid chain: Major DNA-binding protein (1191 aa).

Positions 820-821 (FW) match the Required for filament formation motif. 2 disordered regions span residues 1122-1146 (TAAG…AADE) and 1168-1191 (AGLI…RSRL). The span at 1127–1142 (AAGGGGSATEGGGGGA) shows a compositional bias: gly residues. Residues 1173–1191 (GDDVRGDDEFELPSKRSRL) form a required for nuclear localization region.

This sequence belongs to the herpesviridae major DNA-binding protein family. In terms of assembly, homooligomers. Forms double-helical filaments necessary for the formation of replication compartments within the host nucleus. Interacts with the origin-binding protein. Interacts with the helicase primase complex; this interaction stimulates primer synthesis activity of the helicase-primase complex. Interacts with the DNA polymerase. Interacts with the alkaline exonuclease; this interaction increases its nuclease processivity.

It localises to the host nucleus. Single-stranded DNA-binding protein required for DNA replication. Functionally, plays several crucial roles in viral infection. Participates in the opening of the viral DNA origin to initiate replication by interacting with the origin-binding protein. May disrupt loops, hairpins and other secondary structures present on ssDNA to reduce and eliminate pausing of viral DNA polymerase at specific sites during elongation. Promotes viral DNA recombination by performing strand-transfer, characterized by the ability to transfer a DNA strand from a linear duplex to a complementary single-stranded DNA circle. Can also catalyze the renaturation of complementary single strands. Additionally, reorganizes the host cell nucleus, leading to the formation of prereplicative sites and replication compartments. This process is driven by the protein which can form double-helical filaments in the absence of DNA. The protein is Major DNA-binding protein of Mus musculus (Mouse).